We begin with the raw amino-acid sequence, 160 residues long: Large ribosomal subunit protein uL22c (160 aa).

Belongs to the universal ribosomal protein uL22 family. In terms of assembly, part of the 50S ribosomal subunit.

The protein resides in the plastid. Its subcellular location is the chloroplast. Its function is as follows. This protein binds specifically to 23S rRNA. In terms of biological role, the globular domain of the protein is located near the polypeptide exit tunnel on the outside of the subunit, while an extended beta-hairpin is found that lines the wall of the exit tunnel in the center of the 70S ribosome. The chain is Large ribosomal subunit protein uL22c (rpl22) from Eucalyptus globulus subsp. globulus (Tasmanian blue gum).